Consider the following 305-residue polypeptide: Large ribosomal subunit protein uL3c (305 aa).

Residues 1-84 (MAAILPTFSI…AVGGLEIKMM (84 aa)) constitute a chloroplast transit peptide. The interval 228-256 (SHRALGSIGAGTTPGHVYKGKKMPGRMGG) is disordered.

In terms of assembly, component of the chloroplast large ribosomal subunit (LSU). Mature 70S chloroplast ribosomes of higher plants consist of a small (30S) and a large (50S) subunit. The 30S small subunit contains 1 molecule of ribosomal RNA (16S rRNA) and 24 different proteins. The 50S large subunit contains 3 rRNA molecules (23S, 5S and 4.5S rRNA) and 33 different proteins.

It localises to the plastid. The protein localises to the chloroplast. Functionally, component of the chloroplast ribosome (chloro-ribosome), a dedicated translation machinery responsible for the synthesis of chloroplast genome-encoded proteins, including proteins of the transcription and translation machinery and components of the photosynthetic apparatus. This is Large ribosomal subunit protein uL3c (RPL3) from Spinacia oleracea (Spinach).